Here is a 69-residue protein sequence, read N- to C-terminus: Cytochrome c oxidase subunit 8A, mitochondrial (69 aa).

A mitochondrion-targeting transit peptide spans 1–25 (MSVLTPLLLRGLTGSARRLPMPCAR). An SIFI-degron motif is present at residues 2–19 (SVLTPLLLRGLTGSARRL). The Mitochondrial matrix portion of the chain corresponds to 26 to 36 (VHSKPPREQLG). The helical transmembrane segment at 37–60 (TMDIAIGLTSCFVCFLLPSGWVLS) threads the bilayer. Topologically, residues 61–69 (HLENYKKRE) are mitochondrial intermembrane.

It belongs to the cytochrome c oxidase VIII family. Component of the cytochrome c oxidase (complex IV, CIV), a multisubunit enzyme composed of 14 subunits. The complex is composed of a catalytic core of 3 subunits MT-CO1, MT-CO2 and MT-CO3, encoded in the mitochondrial DNA, and 11 supernumerary subunits COX4I, COX5A, COX5B, COX6A, COX6B, COX6C, COX7A, COX7B, COX7C, COX8 and NDUFA4, which are encoded in the nuclear genome. The complex exists as a monomer or a dimer and forms supercomplexes (SCs) in the inner mitochondrial membrane with NADH-ubiquinone oxidoreductase (complex I, CI) and ubiquinol-cytochrome c oxidoreductase (cytochrome b-c1 complex, complex III, CIII), resulting in different assemblies (supercomplex SCI(1)III(2)IV(1) and megacomplex MCI(2)III(2)IV(2)). In terms of processing, in response to mitochondrial stress, the precursor protein is ubiquitinated by the SIFI complex in the cytoplasm before mitochondrial import, leading to its degradation. Within the SIFI complex, UBR4 initiates ubiquitin chain that are further elongated or branched by KCMF1.

It is found in the mitochondrion inner membrane. The protein operates within energy metabolism; oxidative phosphorylation. In terms of biological role, component of the cytochrome c oxidase, the last enzyme in the mitochondrial electron transport chain which drives oxidative phosphorylation. The respiratory chain contains 3 multisubunit complexes succinate dehydrogenase (complex II, CII), ubiquinol-cytochrome c oxidoreductase (cytochrome b-c1 complex, complex III, CIII) and cytochrome c oxidase (complex IV, CIV), that cooperate to transfer electrons derived from NADH and succinate to molecular oxygen, creating an electrochemical gradient over the inner membrane that drives transmembrane transport and the ATP synthase. Cytochrome c oxidase is the component of the respiratory chain that catalyzes the reduction of oxygen to water. Electrons originating from reduced cytochrome c in the intermembrane space (IMS) are transferred via the dinuclear copper A center (CU(A)) of subunit 2 and heme A of subunit 1 to the active site in subunit 1, a binuclear center (BNC) formed by heme A3 and copper B (CU(B)). The BNC reduces molecular oxygen to 2 water molecules using 4 electrons from cytochrome c in the IMS and 4 protons from the mitochondrial matrix. The sequence is that of Cytochrome c oxidase subunit 8A, mitochondrial (COX8A) from Nycticebus coucang (Slow loris).